Reading from the N-terminus, the 590-residue chain is Protein O-linked-mannose beta-1,4-N-acetylglucosaminyltransferase 2 (590 aa).

Residues 1–4 (MSVG) are Cytoplasmic-facing. The chain crosses the membrane as a helical; Signal-anchor for type II membrane protein span at residues 5–25 (TLLNGLLVSIVAALLWKYSKL). Topologically, residues 26–590 (SEHAALLEEE…PFADVLMCRT (565 aa)) are lumenal. Residues Asn-98, Asn-275, and Asn-553 are each glycosylated (N-linked (GlcNAc...) asparagine). In terms of domain architecture, Fibronectin type-III spans 494-590 (RVRDPQCQTS…PFADVLMCRT (97 aa)).

The protein belongs to the glycosyltransferase 61 family.

It is found in the endoplasmic reticulum membrane. The catalysed reaction is 3-O-(alpha-D-mannosyl)-L-threonyl-[protein] + UDP-N-acetyl-alpha-D-glucosamine = 3-O-(N-acetyl-beta-D-glucosaminyl-(1-&gt;4)-alpha-D-mannosyl)-L-threonyl-[protein] + UDP + H(+). It functions in the pathway protein modification; protein glycosylation. Functionally, O-linked mannose beta-1,4-N-acetylglucosaminyltransferase that transfers UDP-N-acetyl-D-glucosamine to the 4-position of the mannose to generate N-acetyl-D-glucosamine-beta-1,4-O-D-mannosylprotein. Involved in the biosynthesis of the phosphorylated O-mannosyl trisaccharide (N-acetylgalactosamine-beta-3-N-acetylglucosamine-beta-4-(phosphate-6-)mannose), a carbohydrate structure present in alpha-dystroglycan (DAG1), which is required for binding laminin G-like domain-containing extracellular proteins with high affinity. This Takifugu rubripes (Japanese pufferfish) protein is Protein O-linked-mannose beta-1,4-N-acetylglucosaminyltransferase 2 (pomgnt2).